Consider the following 218-residue polypeptide: UPF0502 protein Shewana3_1622 (218 aa).

It belongs to the UPF0502 family.

The sequence is that of UPF0502 protein Shewana3_1622 from Shewanella sp. (strain ANA-3).